Reading from the N-terminus, the 140-residue chain is Nucleoside diphosphate kinase (140 aa).

Positions 11, 59, 87, 93, 104, and 114 each coordinate ATP. Residue His117 is the Pros-phosphohistidine intermediate of the active site.

The protein belongs to the NDK family. In terms of assembly, homotetramer. Mg(2+) is required as a cofactor.

The protein localises to the cytoplasm. It catalyses the reaction a 2'-deoxyribonucleoside 5'-diphosphate + ATP = a 2'-deoxyribonucleoside 5'-triphosphate + ADP. It carries out the reaction a ribonucleoside 5'-diphosphate + ATP = a ribonucleoside 5'-triphosphate + ADP. Its function is as follows. Major role in the synthesis of nucleoside triphosphates other than ATP. The ATP gamma phosphate is transferred to the NDP beta phosphate via a ping-pong mechanism, using a phosphorylated active-site intermediate. This Rhizobium etli (strain CIAT 652) protein is Nucleoside diphosphate kinase.